A 336-amino-acid polypeptide reads, in one-letter code: Biotin synthase (336 aa).

The 230-residue stretch at 57-286 (HHGKSIDLCS…RAIVRTAGGR (230 aa)) folds into the Radical SAM core domain. Cys75, Cys79, and Cys82 together coordinate [4Fe-4S] cluster. [2Fe-2S] cluster is bound by residues Ser119, Cys151, Cys211, and Arg281.

The protein belongs to the radical SAM superfamily. Biotin synthase family. As to quaternary structure, homodimer. The cofactor is [4Fe-4S] cluster. Requires [2Fe-2S] cluster as cofactor.

The catalysed reaction is (4R,5S)-dethiobiotin + (sulfur carrier)-SH + 2 reduced [2Fe-2S]-[ferredoxin] + 2 S-adenosyl-L-methionine = (sulfur carrier)-H + biotin + 2 5'-deoxyadenosine + 2 L-methionine + 2 oxidized [2Fe-2S]-[ferredoxin]. Its pathway is cofactor biosynthesis; biotin biosynthesis; biotin from 7,8-diaminononanoate: step 2/2. Its function is as follows. Catalyzes the conversion of dethiobiotin (DTB) to biotin by the insertion of a sulfur atom into dethiobiotin via a radical-based mechanism. This chain is Biotin synthase, found in Desulfotalea psychrophila (strain LSv54 / DSM 12343).